A 175-amino-acid chain; its full sequence is uncharacterized protein (175 aa).

Residues 143-166 (TCFLFCAFVTSIFIETDYSIFFLL) form a helical membrane-spanning segment.

It is found in the membrane. This is an uncharacterized protein from Saccharomyces cerevisiae (strain ATCC 204508 / S288c) (Baker's yeast).